A 312-amino-acid polypeptide reads, in one-letter code: Ribosomal RNA small subunit methyltransferase H (312 aa).

S-adenosyl-L-methionine-binding positions include 32–34 (AGH), Asp51, Phe78, Asp99, and Gln106.

This sequence belongs to the methyltransferase superfamily. RsmH family.

It is found in the cytoplasm. It catalyses the reaction cytidine(1402) in 16S rRNA + S-adenosyl-L-methionine = N(4)-methylcytidine(1402) in 16S rRNA + S-adenosyl-L-homocysteine + H(+). In terms of biological role, specifically methylates the N4 position of cytidine in position 1402 (C1402) of 16S rRNA. The chain is Ribosomal RNA small subunit methyltransferase H from Exiguobacterium sibiricum (strain DSM 17290 / CCUG 55495 / CIP 109462 / JCM 13490 / 255-15).